A 53-amino-acid chain; its full sequence is MAVKRSTRLGCNDCREINYLTFKNVKKNPEKLALNKFCSRCRKVVVHKEVKRK.

This sequence belongs to the bacterial ribosomal protein bL33 family.

In Mycoplasma pneumoniae (strain ATCC 29342 / M129 / Subtype 1) (Mycoplasmoides pneumoniae), this protein is Large ribosomal subunit protein bL33A (rpmG1).